Reading from the N-terminus, the 865-residue chain is Protein translocase subunit SecA (865 aa).

Residues Gln85, 103–107 (GEGKT), and Asp505 contribute to the ATP site. 4 residues coordinate Zn(2+): Cys847, Cys849, Cys858, and His859.

This sequence belongs to the SecA family. As to quaternary structure, monomer and homodimer. Part of the essential Sec protein translocation apparatus which comprises SecA, SecYEG and auxiliary proteins SecDF. Other proteins may also be involved. Requires Zn(2+) as cofactor.

It localises to the cell membrane. The protein resides in the cytoplasm. It carries out the reaction ATP + H2O + cellular proteinSide 1 = ADP + phosphate + cellular proteinSide 2.. Functionally, part of the Sec protein translocase complex. Interacts with the SecYEG preprotein conducting channel. Has a central role in coupling the hydrolysis of ATP to the transfer of proteins into and across the cell membrane, serving as an ATP-driven molecular motor driving the stepwise translocation of polypeptide chains across the membrane. In Lactococcus lactis subsp. cremoris (strain MG1363), this protein is Protein translocase subunit SecA.